We begin with the raw amino-acid sequence, 110 residues long: Hydrogenase maturation factor HypA (110 aa).

Histidine 2 is a Ni(2+) binding site. Residues cysteine 73, cysteine 76, cysteine 87, and cysteine 89 each coordinate Zn(2+).

Belongs to the HypA/HybF family.

In terms of biological role, involved in the maturation of [NiFe] hydrogenases. Required for nickel insertion into the metal center of the hydrogenase. The sequence is that of Hydrogenase maturation factor HypA from Archaeoglobus fulgidus (strain ATCC 49558 / DSM 4304 / JCM 9628 / NBRC 100126 / VC-16).